We begin with the raw amino-acid sequence, 497 residues long: GDP-fucose protein O-fucosyltransferase 4 (497 aa).

Residues 1–6 (MACRRR) are Cytoplasmic-facing. Residues 7–27 (LLPCAGLGLFGVLCWVWVSFA) form a helical; Signal-anchor for type II membrane protein membrane-spanning segment. The Lumenal portion of the chain corresponds to 28-497 (SFPDDQLPLE…ITERRARGKH (470 aa)). N-linked (GlcNAc...) asparagine glycosylation occurs at Asn-169. Cys-392 and Cys-395 are disulfide-bonded. A disordered region spans residues 406–427 (RAHRKDPERNPPPLPKMASNSH). N-linked (GlcNAc...) asparagine glycosylation is present at Asn-474.

This sequence belongs to the glycosyltransferase 10 family.

The protein resides in the endoplasmic reticulum membrane. It catalyses the reaction L-threonyl-[protein] + GDP-beta-L-fucose = 3-O-(alpha-L-fucosyl)-L-threonyl-[protein] + GDP + H(+). The enzyme catalyses L-seryl-[protein] + GDP-beta-L-fucose = 3-O-(alpha-L-fucosyl)-L-seryl-[protein] + GDP + H(+). Its pathway is protein modification; protein glycosylation. Its function is as follows. Protein O-fucosyltransferase that specifically catalyzes O-fucosylation of serine or threonine residues in EMI domains of target proteins. Attaches fucose through an O-glycosidic linkage. O-fucosylation of EMI domain-containing proteins may be required for facilitating protein folding and secretion. The chain is GDP-fucose protein O-fucosyltransferase 4 (fut11) from Oryzias latipes (Japanese rice fish).